Consider the following 518-residue polypeptide: FAD-dependent monooxygenase tpcD (518 aa).

An N-terminal signal peptide occupies residues M1–A22. Residue N61 is glycosylated (N-linked (GlcNAc...) asparagine). One can recognise an FAD-binding PCMH-type domain in the interval Q75–Q246. Residue H112 is modified to Pros-8alpha-FAD histidine. 4 N-linked (GlcNAc...) asparagine glycosylation sites follow: N163, N208, N216, and N346.

It belongs to the oxygen-dependent FAD-linked oxidoreductase family. FAD is required as a cofactor.

Its pathway is secondary metabolite biosynthesis; terpenoid biosynthesis. FAD-dependent monooxygenase; part of the gene cluster that mediates the biosynthesis of terpestacin. The bifunctional terpene synthase tpcA converts isopentenyl diphosphate (IPP) and dimethylallyl diphosphate (DMAPP) into the sesterterpene preterpestacin I. The C-terminal prenyltransferase (PT) domain of tpcA catalyzes formation of GFPP, whereas the N-terminal terpene cyclase (TC) domain catalyzes the cyclization of GFPP into preterpestacin I. The cytochrome P450 monooxygenase tpcB then hydroxylates preterpestacin I to yield 24-hydroxypreterpstacin I (renamed as preterpestacin II) whereas the cytochrome P450 monooxygenase tpcC further hydroxylates preterpestacin II to yield 16,17-dihydroxypreterpestacin II (renamed as preterpestacin III). Finally, the FAD-dependent monooxygenase tpcD converts preterpestacin III into terpestacin. This chain is FAD-dependent monooxygenase tpcD, found in Cochliobolus heterostrophus (strain C5 / ATCC 48332 / race O) (Southern corn leaf blight fungus).